The primary structure comprises 542 residues: Carboxypeptidase Y homolog A (542 aa).

Residues Met-1–Val-17 form the signal peptide. Residues Pro-18–Lys-123 constitute a propeptide that is removed on maturation. Cystine bridges form between Cys-178–Cys-418, Cys-312–Cys-326, Cys-336–Cys-359, Cys-343–Cys-352, and Cys-381–Cys-388. A glycan (N-linked (GlcNAc...) asparagine) is linked at Asn-209. Residue Ser-265 is part of the active site. Asp-457 is a catalytic residue. Residue Asn-508 is glycosylated (N-linked (GlcNAc...) asparagine). Residue His-519 is part of the active site.

This sequence belongs to the peptidase S10 family.

The protein localises to the vacuole. The enzyme catalyses Release of a C-terminal amino acid with broad specificity.. Its function is as follows. Vacuolar carboxypeptidase involved in degradation of small peptides. Digests preferentially peptides containing an aliphatic or hydrophobic residue in P1' position, as well as methionine, leucine or phenylalanine in P1 position of ester substrate. The polypeptide is Carboxypeptidase Y homolog A (cpyA) (Aspergillus oryzae (strain ATCC 42149 / RIB 40) (Yellow koji mold)).